We begin with the raw amino-acid sequence, 452 residues long: MLHRATTTAAAAAAAALLLCPVQALVRPDGVGKLPALGWNSWNAFGCDIDEEKILTAANQIVNLGLKDLGYEYVNIDDCWSVKSGRNATTGRIMPDLTKFPDGISGLAEKIHNLGLKIGIYSSAGWTTCAGYPASLGNETIDAETFAEWGIDYLKYDNCGVPPDWQDQYSYCVPDSGDPATNPNGTCPNLQNPAPAVYDWRTSKTAERYRRMRDALLGVQDKRTILFSLCDWGQADVNEWGAETGNSWRMSGDISPNWPRISTIANLNSFELNSVDFWGHNDPDMLEVGNGNLTLAENRAHFALWAAMKSPLIIGTALDKIDQDHLSILSNKYLLTFHQDPQIGRPAYPYKWGYNPDWTFDPGHPAEYWSGPTSSGDVLVLMLNTESGPANRTAVWSEVPELKGRNNNNNSSSTGFQVTDAWTGSSLGCVQGGYSVELESHDVAVLVVSGEC.

A signal peptide spans 1–24; it reads MLHRATTTAAAAAAAALLLCPVQA. Cysteine 47 and cysteine 79 are oxidised to a cystine. Asparagine 87 and asparagine 138 each carry an N-linked (GlcNAc...) asparagine glycan. A disulfide bond links cysteine 129 and cysteine 159. The active-site Nucleophile is aspartate 157. N-linked (GlcNAc...) asparagine glycosylation is present at asparagine 184. Position 231 to 235 (231 to 235) interacts with substrate; sequence DWGQA. Aspartate 253 functions as the Proton donor in the catalytic mechanism. N-linked (GlcNAc...) asparagine glycosylation is found at asparagine 292, asparagine 391, asparagine 409, and asparagine 410.

This sequence belongs to the glycosyl hydrolase 27 family.

It localises to the secreted. The enzyme catalyses Hydrolysis of terminal, non-reducing alpha-D-galactose residues in alpha-D-galactosides, including galactose oligosaccharides, galactomannans and galactolipids.. Functionally, hydrolyzes a variety of simple alpha-D-galactoside as well as more complex molecules such as oligosaccharides and polysaccharides. The chain is Probable alpha-galactosidase B from Talaromyces emersonii (Thermophilic fungus).